A 117-amino-acid polypeptide reads, in one-letter code: Protein Wnt-6 (117 aa).

A lipid anchor (O-palmitoleoyl serine; by PORCN) is attached at S1. C83 and C98 are joined by a disulfide. An N-linked (GlcNAc...) asparagine glycan is attached at N84.

This sequence belongs to the Wnt family. Palmitoleoylation is required for efficient binding to frizzled receptors. Depalmitoleoylation leads to Wnt signaling pathway inhibition.

The protein resides in the secreted. The protein localises to the extracellular space. It localises to the extracellular matrix. Its function is as follows. Ligand for members of the frizzled family of seven transmembrane receptors. Probable developmental protein. May be a signaling molecule which affects the development of discrete regions of tissues. Is likely to signal over only few cell diameters. In Plethodon jordani (Red-cheeked salamander), this protein is Protein Wnt-6 (WNT-6).